We begin with the raw amino-acid sequence, 150 residues long: Large ribosomal subunit protein bL9 (150 aa).

This sequence belongs to the bacterial ribosomal protein bL9 family.

Binds to the 23S rRNA. In Wolinella succinogenes (strain ATCC 29543 / DSM 1740 / CCUG 13145 / JCM 31913 / LMG 7466 / NCTC 11488 / FDC 602W) (Vibrio succinogenes), this protein is Large ribosomal subunit protein bL9.